The following is a 1516-amino-acid chain: Alpha-2-macroglobulin homolog (1516 aa).

The N-terminal stretch at methionine 1–alanine 26 is a signal peptide.

The protein belongs to the protease inhibitor I39 (alpha-2-macroglobulin) family. Bacterial alpha-2-macroglobulin subfamily.

The chain is Alpha-2-macroglobulin homolog from Pseudomonas aeruginosa (strain ATCC 15692 / DSM 22644 / CIP 104116 / JCM 14847 / LMG 12228 / 1C / PRS 101 / PAO1).